Consider the following 326-residue polypeptide: tRNA-modifying protein YgfZ (326 aa).

Residues Trp-27 and Trp-189 each contribute to the folate site.

Belongs to the tRNA-modifying YgfZ family.

Its subcellular location is the cytoplasm. Functionally, folate-binding protein involved in regulating the level of ATP-DnaA and in the modification of some tRNAs. It is probably a key factor in regulatory networks that act via tRNA modification, such as initiation of chromosomal replication. This chain is tRNA-modifying protein YgfZ, found in Shigella boydii serotype 4 (strain Sb227).